Reading from the N-terminus, the 448-residue chain is Phosphoglucosamine mutase (448 aa).

The active-site Phosphoserine intermediate is the Ser-100. Mg(2+) contacts are provided by Ser-100, Asp-240, Asp-242, and Asp-244. The residue at position 100 (Ser-100) is a Phosphoserine.

The protein belongs to the phosphohexose mutase family. Mg(2+) serves as cofactor. Post-translationally, activated by phosphorylation.

The catalysed reaction is alpha-D-glucosamine 1-phosphate = D-glucosamine 6-phosphate. Catalyzes the conversion of glucosamine-6-phosphate to glucosamine-1-phosphate. This Clostridium perfringens (strain SM101 / Type A) protein is Phosphoglucosamine mutase.